The primary structure comprises 49 residues: uncharacterized protein (49 aa).

This is an uncharacterized protein from Saccharomyces cerevisiae (strain ATCC 204508 / S288c) (Baker's yeast).